The chain runs to 366 residues: MLIWLVELSEYFKFLNLFRYITFRTGAALFTSALIVFLFGPTIINSLRIRQGKGQPIRADGPQTHFKKAGTPTMGGLMILAGIVGASLLWADLSNVYVVATLLVTLGFGAIGFYDDYLKVTKQSHKGFSGKARLGIEFVIAGIAVYFMMRTALASGTAGSTFGSSIAFPFFKDFLINLGIMFVVFGGFVIVGAGNAVNLTDGLDGLAIVPVMIAAASFGVIAYLAGNVVFANYLQINFVPGTGELAVVLGAVIGAGLGFLWFNAPPAAIFMGDTGSLALGGTIGTVAVATKHEIVMAIIGGLFVMETLSVIIQVGFFKMTGRRVFLMAPIHHHFEKKGWTESQVVIRFWIIAVGLALLGLSTLKLR.

The next 10 helical transmembrane spans lie at 27–47, 71–91, 93–113, 134–154, 174–194, 205–225, 245–265, 268–288, 294–314, and 343–363; these read AALF…INSL, TPTM…LLWA, LSNV…AIGF, LGIE…TALA, FLIN…VGAG, GLAI…AYLA, LAVV…FNAP, AIFM…TVAV, IVMA…IIQV, and QVVI…LSTL.

This sequence belongs to the glycosyltransferase 4 family. MraY subfamily. It depends on Mg(2+) as a cofactor.

It localises to the cell inner membrane. The enzyme catalyses UDP-N-acetyl-alpha-D-muramoyl-L-alanyl-gamma-D-glutamyl-meso-2,6-diaminopimeloyl-D-alanyl-D-alanine + di-trans,octa-cis-undecaprenyl phosphate = di-trans,octa-cis-undecaprenyl diphospho-N-acetyl-alpha-D-muramoyl-L-alanyl-D-glutamyl-meso-2,6-diaminopimeloyl-D-alanyl-D-alanine + UMP. It functions in the pathway cell wall biogenesis; peptidoglycan biosynthesis. Catalyzes the initial step of the lipid cycle reactions in the biosynthesis of the cell wall peptidoglycan: transfers peptidoglycan precursor phospho-MurNAc-pentapeptide from UDP-MurNAc-pentapeptide onto the lipid carrier undecaprenyl phosphate, yielding undecaprenyl-pyrophosphoryl-MurNAc-pentapeptide, known as lipid I. This Rhizobium etli (strain ATCC 51251 / DSM 11541 / JCM 21823 / NBRC 15573 / CFN 42) protein is Phospho-N-acetylmuramoyl-pentapeptide-transferase.